The sequence spans 947 residues: MGFWENNKDSITSGLKSAGKYGYQGTKYVAKTGYKASKKHYNNSKARRERKSGKKNSSDEEYDSEDEMEYERKPTDIRSLKDPKSFPPPPLKPGQKTYTGQQQQQMPNGQASYAFQGAYQGQPGAGSMEQSQYAQPQYNQYPQQQLQQGVMPQQQQLQQGVVPQQPPIYGEQVPPYGSNSNATSYQSLPQQNQPQNAIPSQVSLNSASQQSTGFVSQNLQYGTQSSNPAPSPSFQNGLQCHQQPQYVSHGSTNLGQSQFPSGQQQQPTTQFGQQVLPSPAQPQQQQQGQPLPPPRGQVILPAPGEPLSNGFGQQQQQQQQQQQPLNQNNALLPQMNVEGVSGMAAVQPVYGQAMSSTTNMQDSNPSYGASPMQGQPPVGGQPPVPVRMQPQPPQPMQQGNIYPIEPSLDSTGSTPHFEVTPFDPDAPAPKPKIDIPTVDVSSLPPPPTHRDRGAVVHQEPAPSGKIQPNTTSSAASLPAKHSRTTTADNERNSGNKENDESTSKSSILGHYDVDVNIMPPPKPFRHGLDSVPSEHTRKNAPERAVPILPPRNNVEPPPPPSRGNFERTESVLSTNAANVQEDPISNFLPPPKPFRHTETKQNQNSKASPVEMKGEVLPGHPSEEDRNVEPSLVPQSKPQSQSQFRRAHMETQPIQNFQPPPKPFRRSQSSNSSDSSYTIDGPEANHGRGRGRIAKHHDGDEYNPKSENSTENGRLGDAPNSFIRKRAPTPPAPSRSEKLHEGTITSEVDSSKDANKYEKSIPPVTSSIQAQQSTKKAPPPVVKPKPRNFSLKANEYPKELTREATGQDEVLNSITNELSHIKLRKTNVNLEKLGGSKKVKDSSPVPSDLDEKYVSASGSITPPRPPPSRSSPKKVPPVVPKNNDNLKKKPPVVPKKKPLLKSLEPRPIEMERAYSGDISAADDNLNPFERYKRNVVPQEDDRLHKLK.

Disordered regions lie at residues 1 to 332, 354 to 810, and 824 to 904; these read MGFW…NALL, MSST…QDEV, and RKTN…KSLE. Basic residues predominate over residues 36–54; it reads ASKKHYNNSKARRERKSGK. Residues Ser57, Ser58, and Ser64 each carry the phosphoserine modification. A compositionally biased stretch (acidic residues) spans 59–69; sequence DEEYDSEDEME. Residues 70–84 show a composition bias toward basic and acidic residues; sequence YERKPTDIRSLKDPK. Composition is skewed to low complexity over residues 93–105 and 130–163; these read PGQK…QQQQ and QSQY…GVVP. The segment covering 177-255 has biased composition (polar residues); the sequence is GSNSNATSYQ…YVSHGSTNLG (79 aa). Low complexity-rich tracts occupy residues 256–289 and 313–332; these read QSQF…QQGQ and QQQQ…NALL. The segment covering 354 to 367 has biased composition (polar residues); the sequence is MSSTTNMQDSNPSY. The span at 379 to 395 shows a compositional bias: pro residues; that stretch reads GGQPPVPVRMQPQPPQP. Positions 466-475 are enriched in polar residues; the sequence is IQPNTTSSAA. Ser476 is modified (phosphoserine). Basic and acidic residues-rich tracts occupy residues 488 to 502 and 526 to 541; these read DNER…DEST and HGLD…KNAP. Positions 633 to 644 are enriched in polar residues; it reads VPQSKPQSQSQF. Residues 667 to 676 are compositionally biased toward low complexity; it reads SQSSNSSDSS. Position 729 is a phosphothreonine (Thr729). The span at 749-759 shows a compositional bias: basic and acidic residues; it reads DSSKDANKYEK. The span at 763–774 shows a compositional bias: polar residues; it reads PVTSSIQAQQST. Thr861 is modified (phosphothreonine). A compositionally biased stretch (pro residues) spans 862–879; it reads PPRPPPSRSSPKKVPPVV. Basic residues predominate over residues 888–899; the sequence is KKPPVVPKKKPL.

This sequence belongs to the AIM3 family. In terms of assembly, interacts with RVS167.

Its subcellular location is the membrane raft. The polypeptide is Altered inheritance of mitochondria protein 3 (AIM3) (Saccharomyces cerevisiae (strain JAY291) (Baker's yeast)).